The primary structure comprises 337 residues: Ketol-acid reductoisomerase (NADP(+)) (337 aa).

In terms of domain architecture, KARI N-terminal Rossmann spans 1 to 180; sequence MQVYYDKDAD…GGTKGGVIET (180 aa). Residues 24 to 27, R47, and S51 contribute to the NADP(+) site; that span reads YGSQ. H106 is a catalytic residue. An NADP(+)-binding site is contributed by G132. The KARI C-terminal knotted domain maps to 181–326; it reads TFREETETDL…AQLRAMMPWI (146 aa). Positions 189, 193, 225, and 229 each coordinate Mg(2+). S250 is a binding site for substrate.

This sequence belongs to the ketol-acid reductoisomerase family. It depends on Mg(2+) as a cofactor.

The enzyme catalyses (2R)-2,3-dihydroxy-3-methylbutanoate + NADP(+) = (2S)-2-acetolactate + NADPH + H(+). The catalysed reaction is (2R,3R)-2,3-dihydroxy-3-methylpentanoate + NADP(+) = (S)-2-ethyl-2-hydroxy-3-oxobutanoate + NADPH + H(+). It functions in the pathway amino-acid biosynthesis; L-isoleucine biosynthesis; L-isoleucine from 2-oxobutanoate: step 2/4. The protein operates within amino-acid biosynthesis; L-valine biosynthesis; L-valine from pyruvate: step 2/4. In terms of biological role, involved in the biosynthesis of branched-chain amino acids (BCAA). Catalyzes an alkyl-migration followed by a ketol-acid reduction of (S)-2-acetolactate (S2AL) to yield (R)-2,3-dihydroxy-isovalerate. In the isomerase reaction, S2AL is rearranged via a Mg-dependent methyl migration to produce 3-hydroxy-3-methyl-2-ketobutyrate (HMKB). In the reductase reaction, this 2-ketoacid undergoes a metal-dependent reduction by NADPH to yield (R)-2,3-dihydroxy-isovalerate. The sequence is that of Ketol-acid reductoisomerase (NADP(+)) from Neisseria meningitidis serogroup C (strain 053442).